A 426-amino-acid chain; its full sequence is D-tagatose-1,6-bisphosphate aldolase subunit KbaZ (426 aa).

The protein belongs to the GatZ/KbaZ family. KbaZ subfamily. As to quaternary structure, forms a complex with KbaY.

It participates in carbohydrate metabolism; D-tagatose 6-phosphate degradation; D-glyceraldehyde 3-phosphate and glycerone phosphate from D-tagatose 6-phosphate: step 2/2. Component of the tagatose-1,6-bisphosphate aldolase KbaYZ that is required for full activity and stability of the Y subunit. Could have a chaperone-like function for the proper and stable folding of KbaY. When expressed alone, KbaZ does not show any aldolase activity. The polypeptide is D-tagatose-1,6-bisphosphate aldolase subunit KbaZ (Escherichia coli O157:H7).